The following is an 85-amino-acid chain: Large ribosomal subunit protein bL31B (85 aa).

It belongs to the bacterial ribosomal protein bL31 family. Type B subfamily. As to quaternary structure, part of the 50S ribosomal subunit.

In Staphylococcus epidermidis (strain ATCC 35984 / DSM 28319 / BCRC 17069 / CCUG 31568 / BM 3577 / RP62A), this protein is Large ribosomal subunit protein bL31B.